Here is a 207-residue protein sequence, read N- to C-terminus: Na(+)-translocating NADH-quinone reductase subunit D (207 aa).

6 helical membrane passes run 20–40 (IALQILGICSALAVTTQLQTA), 41–61 (FVMAIAVSLVTAFSSMFISMI), 69–89 (IRIIVQMAIIASLVILVDQIL), 102–122 (VFVGLIITNCIVMGRAEAFAM), 130–150 (FVDGIGNGLGYGAMLVIVAFL), and 177–197 (NGLFLLAPSAFFIIGFVIWAI).

It belongs to the NqrDE/RnfAE family. As to quaternary structure, composed of six subunits; NqrA, NqrB, NqrC, NqrD, NqrE and NqrF.

The protein resides in the cell inner membrane. The catalysed reaction is a ubiquinone + n Na(+)(in) + NADH + H(+) = a ubiquinol + n Na(+)(out) + NAD(+). NQR complex catalyzes the reduction of ubiquinone-1 to ubiquinol by two successive reactions, coupled with the transport of Na(+) ions from the cytoplasm to the periplasm. NqrA to NqrE are probably involved in the second step, the conversion of ubisemiquinone to ubiquinol. The chain is Na(+)-translocating NADH-quinone reductase subunit D from Haemophilus ducreyi (strain 35000HP / ATCC 700724).